Reading from the N-terminus, the 498-residue chain is Type II secretion system protein E (498 aa).

4 residues coordinate Zn(2+): Cys394, Cys397, Cys425, and Cys428.

Belongs to the GSP E family. As to quaternary structure, forms homooligomers; most probably hexamers. Interacts with OutL/GspL. Zn(2+) is required as a cofactor.

It is found in the cell inner membrane. It carries out the reaction ATP + H2O + cellular proteinSide 1 = ADP + phosphate + cellular proteinSide 2.. In terms of biological role, ATPase component of the type II secretion system required for the energy-dependent secretion of extracellular factors such as proteases and toxins from the periplasm. Acts as a molecular motor to provide the energy that is required for assembly of the pseudopilus and the extrusion of substrates generated in the cytoplasm. The protein is Type II secretion system protein E (outE) of Dickeya dadantii (strain 3937) (Erwinia chrysanthemi (strain 3937)).